A 137-amino-acid polypeptide reads, in one-letter code: Small ribosomal subunit protein bS6 (137 aa).

Residues 96–137 (ITEASPMAKAKDERDTRRSSEERAPRAEATEEVKESAENTAE) are disordered. The segment covering 104-137 (KAKDERDTRRSSEERAPRAEATEEVKESAENTAE) has biased composition (basic and acidic residues).

The protein belongs to the bacterial ribosomal protein bS6 family.

Binds together with bS18 to 16S ribosomal RNA. The sequence is that of Small ribosomal subunit protein bS6 from Shewanella piezotolerans (strain WP3 / JCM 13877).